We begin with the raw amino-acid sequence, 785 residues long: Phosphoinositide phosphatase SAC5 (785 aa).

Residues 158 to 533 form the SAC domain; that stretch reads LSVVDLSKNF…GNTLAMQYGG (376 aa). A Phosphatase catalytic core motif is present at residues 469–480; it reads RTNCIDCLDRTN. The span at 688 to 700 shows a compositional bias: polar residues; sequence GSGQMFQGSSSNS. Positions 688–707 are disordered; that stretch reads GSGQMFQGSSSNSDSHRPND.

Component of the PI(3,5)P2 regulatory complex at least composed of ATG18, SAC/FIG4, FAB1 and VAC14. It depends on Mg(2+) as a cofactor. Ubiquitous with a higher level of expression in young seedlings than in other tissues.

The protein localises to the vacuole membrane. The enzyme catalyses a 1,2-diacyl-sn-glycero-3-phospho-(1D-myo-inositol-3,5-bisphosphate) + H2O = a 1,2-diacyl-sn-glycero-3-phospho-(1D-myo-inositol-3-phosphate) + phosphate. Functionally, the PI(3,5)P2 regulatory complex regulates both the synthesis and turnover of phosphatidylinositol 3,5-bisphosphate (PtdIns(3,5)P2). The chain is Phosphoinositide phosphatase SAC5 (SAC5) from Arabidopsis thaliana (Mouse-ear cress).